The sequence spans 89 residues: Small ribosomal subunit protein bS20 (89 aa).

Over residues 1–11 (MANIKSQIKRN) the composition is skewed to polar residues. The segment at 1 to 22 (MANIKSQIKRNLTNEKRRLRNK) is disordered.

It belongs to the bacterial ribosomal protein bS20 family.

Functionally, binds directly to 16S ribosomal RNA. The chain is Small ribosomal subunit protein bS20 from Frankia casuarinae (strain DSM 45818 / CECT 9043 / HFP020203 / CcI3).